A 542-amino-acid chain; its full sequence is Zinc finger protein 280A (542 aa).

Positions 66 to 185 are disordered; sequence VTPGSNSRRK…RDSKRVKLRD (120 aa). The span at 107–122 shows a compositional bias: polar residues; that stretch reads EGRSTDSPVTMKSSSE. Over residues 128–143 the composition is skewed to low complexity; the sequence is SSPQVVSPSSSDSLPP. The segment covering 161 to 185 has biased composition (basic and acidic residues); that stretch reads SSPDSKRLSTSDINSRDSKRVKLRD. 4 consecutive C2H2-type zinc fingers follow at residues 334–357, 364–387, 423–445, and 451–474; these read TTCQ…DSVH, AVCK…KDHH, LLCL…CWRH, and LQCS…TKDH. Positions 499 to 520 are enriched in polar residues; that stretch reads QPGSSGMASVIVSNTDPQSSPV. Positions 499–542 are disordered; the sequence is QPGSSGMASVIVSNTDPQSSPVKTKKKTAMNTRDSRLPCSKDSS.

It is found in the nucleus. In terms of biological role, may function as a transcription factor. The chain is Zinc finger protein 280A (ZNF280A) from Homo sapiens (Human).